Here is a 260-residue protein sequence, read N- to C-terminus: Segregation and condensation protein A (260 aa).

This sequence belongs to the ScpA family. In terms of assembly, component of a cohesin-like complex composed of ScpA, ScpB and the Smc homodimer, in which ScpA and ScpB bind to the head domain of Smc. The presence of the three proteins is required for the association of the complex with DNA.

The protein localises to the cytoplasm. In terms of biological role, participates in chromosomal partition during cell division. May act via the formation of a condensin-like complex containing Smc and ScpB that pull DNA away from mid-cell into both cell halves. This is Segregation and condensation protein A from Halalkalibacterium halodurans (strain ATCC BAA-125 / DSM 18197 / FERM 7344 / JCM 9153 / C-125) (Bacillus halodurans).